A 271-amino-acid polypeptide reads, in one-letter code: Short-chain type dehydrogenase/reductase (271 aa).

Ile25–Val49 serves as a coordination point for NAD(+). A substrate-binding site is contributed by Ser166. Tyr179 (proton acceptor) is an active-site residue.

Belongs to the short-chain dehydrogenases/reductases (SDR) family.

The polypeptide is Short-chain type dehydrogenase/reductase (Picea abies (Norway spruce)).